The chain runs to 182 residues: Isopentenyl-diphosphate Delta-isomerase (182 aa).

Residues His-25 and His-32 each coordinate Mn(2+). The 135-residue stretch at 30-164 (LLHLAFSSWL…PWAFSPWMVM (135 aa)) folds into the Nudix hydrolase domain. Residue Cys-67 is part of the active site. Residue His-69 coordinates Mn(2+). Glu-87 is a Mg(2+) binding site. Residues Glu-114 and Glu-116 each coordinate Mn(2+). The active site involves Glu-116.

Belongs to the IPP isomerase type 1 family. In terms of assembly, homodimer. The cofactor is Mg(2+). Mn(2+) serves as cofactor.

Its subcellular location is the cytoplasm. It carries out the reaction isopentenyl diphosphate = dimethylallyl diphosphate. Its pathway is isoprenoid biosynthesis; dimethylallyl diphosphate biosynthesis; dimethylallyl diphosphate from isopentenyl diphosphate: step 1/1. Catalyzes the 1,3-allylic rearrangement of the homoallylic substrate isopentenyl (IPP) to its highly electrophilic allylic isomer, dimethylallyl diphosphate (DMAPP). The protein is Isopentenyl-diphosphate Delta-isomerase of Shigella flexneri serotype 5b (strain 8401).